Here is a 275-residue protein sequence, read N- to C-terminus: tRNA pseudouridine synthase A (275 aa).

Catalysis depends on Asp-56, which acts as the Nucleophile. Tyr-114 lines the substrate pocket.

It belongs to the tRNA pseudouridine synthase TruA family. As to quaternary structure, homodimer.

It carries out the reaction uridine(38/39/40) in tRNA = pseudouridine(38/39/40) in tRNA. In terms of biological role, formation of pseudouridine at positions 38, 39 and 40 in the anticodon stem and loop of transfer RNAs. In Polynucleobacter asymbioticus (strain DSM 18221 / CIP 109841 / QLW-P1DMWA-1) (Polynucleobacter necessarius subsp. asymbioticus), this protein is tRNA pseudouridine synthase A.